A 254-amino-acid chain; its full sequence is Cobalt transport protein CbiM (254 aa).

Positions 1-31 (MKTILRPFTLLSRSIFLALFVLFLWSPDAHA) are cleaved as a signal peptide. 6 consecutive transmembrane segments (helical) span residues 37 to 57 (GFLP…FLVV), 74 to 94 (LLLA…IPSV), 106 to 126 (LGAV…VLLF), 128 to 148 (ALLL…SMAI), 169 to 189 (WLAV…VTSL), and 212 to 232 (IFAL…VMVF).

The protein belongs to the CbiM family. As to quaternary structure, forms an energy-coupling factor (ECF) transporter complex composed of an ATP-binding protein (A component, CbiO), a transmembrane protein (T component, CbiQ) and 2 possible substrate-capture proteins (S components, CbiM and CbiN) of unknown stoichimetry.

The protein localises to the cell inner membrane. Its pathway is cofactor biosynthesis; adenosylcobalamin biosynthesis. Its function is as follows. Part of the energy-coupling factor (ECF) transporter complex CbiMNOQ involved in cobalt import. This chain is Cobalt transport protein CbiM, found in Chlorobium limicola (strain DSM 245 / NBRC 103803 / 6330).